Here is a 626-residue protein sequence, read N- to C-terminus: Ankyrin repeat domain-containing protein 13B (626 aa).

Position 1 is an N-acetylmethionine (Met1). ANK repeat units lie at residues 47-76 (RGRTPLHLATTLGHLECARVLLAHGADVGR) and 80-109 (SGWTVLQEAVSTRDLELVQLVLRYRDYQRV). The disordered stretch occupies residues 442 to 474 (PVPSVRGSPSSETPSPGSDSSSVSSSSSTTSCR). Positions 449-472 (SPSSETPSPGSDSSSVSSSSSTTS) are enriched in low complexity. Residues 503–522 (DDDDLLQFAIQQSLLEAGSE) enclose the UIM 1 domain. Disordered stretches follow at residues 534-590 (NSKP…DEQL) and 595-614 (ELSAQEQEERRRRARQEEEE). The segment covering 554–573 (PPTPQRQPAPPASVPSPRPS) has biased composition (pro residues). 2 UIM domains span residues 585–604 (SYDEQLRLAMELSAQEQEER) and 610–626 (QEEEELERILRLSLTEQ).

In terms of assembly, interacts with EGFR (ubiquitinated); the interaction is direct and may regulate EGFR internalization.

It is found in the cell membrane. It localises to the late endosome. The protein localises to the early endosome. Ubiquitin-binding protein that specifically recognizes and binds 'Lys-63'-linked ubiquitin. Does not bind 'Lys-48'-linked ubiquitin. Positively regulates the internalization of ligand-activated EGFR by binding to the Ub moiety of ubiquitinated EGFR at the cell membrane. The chain is Ankyrin repeat domain-containing protein 13B (ANKRD13B) from Homo sapiens (Human).